A 156-amino-acid chain; its full sequence is Small ribosomal subunit protein uS7 (156 aa).

This sequence belongs to the universal ribosomal protein uS7 family. As to quaternary structure, part of the 30S ribosomal subunit. Contacts proteins S9 and S11.

In terms of biological role, one of the primary rRNA binding proteins, it binds directly to 16S rRNA where it nucleates assembly of the head domain of the 30S subunit. Is located at the subunit interface close to the decoding center, probably blocks exit of the E-site tRNA. This is Small ribosomal subunit protein uS7 from Chlorobaculum parvum (strain DSM 263 / NCIMB 8327) (Chlorobium vibrioforme subsp. thiosulfatophilum).